We begin with the raw amino-acid sequence, 673 residues long: Chaperonin-containing T-complex member BBS12 (673 aa).

The protein belongs to the TCP-1 chaperonin family. BBS12 subfamily. As to quaternary structure, component of the chaperonin-containing T-complex (TRiC), a heterooligomeric complex of about 850 to 900 kDa that forms two stacked rings, 12 to 16 nm in diameter.

It localises to the cell projection. The protein localises to the cilium. In terms of biological role, component of the chaperonin-containing T-complex (TRiC), a molecular chaperone complex that assists the folding of proteins upon ATP hydrolysis. The chain is Chaperonin-containing T-complex member BBS12 (bbs12) from Xenopus laevis (African clawed frog).